Reading from the N-terminus, the 445-residue chain is Ubiquitin carboxyl-terminal hydrolase MINDY-3 (445 aa).

C51 serves as the catalytic Nucleophile. At S125 the chain carries Phosphoserine. H287 serves as the catalytic Proton acceptor.

It belongs to the MINDY deubiquitinase family. FAM188 subfamily. As to quaternary structure, interacts with COPS5.

It localises to the nucleus. The enzyme catalyses Thiol-dependent hydrolysis of ester, thioester, amide, peptide and isopeptide bonds formed by the C-terminal Gly of ubiquitin (a 76-residue protein attached to proteins as an intracellular targeting signal).. In terms of biological role, hydrolase that can remove 'Lys-48'-linked conjugated ubiquitin from proteins. This Bos taurus (Bovine) protein is Ubiquitin carboxyl-terminal hydrolase MINDY-3 (MINDY3).